Reading from the N-terminus, the 456-residue chain is Phosphomethylpyrimidine synthase (456 aa).

Substrate contacts are provided by residues asparagine 80, methionine 109, tyrosine 139, histidine 175, serine 195–glycine 197, aspartate 236–arginine 239, and glutamate 275. Position 279 (histidine 279) interacts with Zn(2+). Residue tyrosine 302 participates in substrate binding. A Zn(2+)-binding site is contributed by histidine 343. [4Fe-4S] cluster-binding residues include cysteine 423, cysteine 426, and cysteine 431.

It belongs to the ThiC family. [4Fe-4S] cluster serves as cofactor.

The catalysed reaction is 5-amino-1-(5-phospho-beta-D-ribosyl)imidazole + S-adenosyl-L-methionine = 4-amino-2-methyl-5-(phosphooxymethyl)pyrimidine + CO + 5'-deoxyadenosine + formate + L-methionine + 3 H(+). Its pathway is cofactor biosynthesis; thiamine diphosphate biosynthesis. Its function is as follows. Catalyzes the synthesis of the hydroxymethylpyrimidine phosphate (HMP-P) moiety of thiamine from aminoimidazole ribotide (AIR) in a radical S-adenosyl-L-methionine (SAM)-dependent reaction. In Prochlorococcus marinus subsp. pastoris (strain CCMP1986 / NIES-2087 / MED4), this protein is Phosphomethylpyrimidine synthase.